Reading from the N-terminus, the 305-residue chain is Thioredoxin reductase (305 aa).

28 to 35 contributes to the FAD binding site; that stretch reads LGIETSSQ. A disulfide bridge links cysteine 129 with cysteine 132. 272-281 serves as a coordination point for FAD; that stretch reads DCCDWIYRQA.

The protein belongs to the class-II pyridine nucleotide-disulfide oxidoreductase family. As to quaternary structure, homodimer. The cofactor is FAD.

It is found in the cytoplasm. It carries out the reaction [thioredoxin]-dithiol + NADP(+) = [thioredoxin]-disulfide + NADPH + H(+). The protein is Thioredoxin reductase (TRXB) of Spironucleus barkhanus.